Here is a 61-residue protein sequence, read N- to C-terminus: Small ribosomal subunit protein uS14B (61 aa).

The Zn(2+) site is built by C24, C27, C40, and C43.

Belongs to the universal ribosomal protein uS14 family. Zinc-binding uS14 subfamily. As to quaternary structure, part of the 30S ribosomal subunit. Contacts proteins S3 and S10. The cofactor is Zn(2+).

Functionally, binds 16S rRNA, required for the assembly of 30S particles and may also be responsible for determining the conformation of the 16S rRNA at the A site. The polypeptide is Small ribosomal subunit protein uS14B (Bacillus velezensis (strain DSM 23117 / BGSC 10A6 / LMG 26770 / FZB42) (Bacillus amyloliquefaciens subsp. plantarum)).